Here is a 387-residue protein sequence, read N- to C-terminus: Phosphoglycerate kinase (387 aa).

Residues 21–23 (DLN), arginine 36, 59–62 (HLGR), arginine 113, and arginine 146 contribute to the substrate site. ATP-binding positions include lysine 197, glutamate 314, and 340-343 (GGDT).

This sequence belongs to the phosphoglycerate kinase family. Monomer.

It localises to the cytoplasm. The catalysed reaction is (2R)-3-phosphoglycerate + ATP = (2R)-3-phospho-glyceroyl phosphate + ADP. Its pathway is carbohydrate degradation; glycolysis; pyruvate from D-glyceraldehyde 3-phosphate: step 2/5. The chain is Phosphoglycerate kinase from Yersinia enterocolitica serotype O:8 / biotype 1B (strain NCTC 13174 / 8081).